Here is a 271-residue protein sequence, read N- to C-terminus: NAD kinase (271 aa).

The active-site Proton acceptor is the Asp-52. NAD(+) is bound by residues 52-53, 129-130, Arg-155, Asp-157, and Ala-192; these read DG and NE.

The protein belongs to the NAD kinase family. Requires a divalent metal cation as cofactor.

It is found in the cytoplasm. It catalyses the reaction NAD(+) + ATP = ADP + NADP(+) + H(+). In terms of biological role, involved in the regulation of the intracellular balance of NAD and NADP, and is a key enzyme in the biosynthesis of NADP. Catalyzes specifically the phosphorylation on 2'-hydroxyl of the adenosine moiety of NAD to yield NADP. This is NAD kinase from Geobacillus stearothermophilus (Bacillus stearothermophilus).